Consider the following 123-residue polypeptide: Chaperone protein SycN (123 aa).

Interacts with YscB to form a complex which specifically binds to YopN.

Its subcellular location is the cytoplasm. The protein localises to the cell inner membrane. Its function is as follows. Functions as a specific chaperone for YopN. It could facilitate the secretion and the subsequent translocation of YopN. The chain is Chaperone protein SycN (sycN) from Yersinia pseudotuberculosis serotype I (strain IP32953).